The sequence spans 172 residues: Light-harvesting complex-like protein OHP2, chloroplastic (172 aa).

The transit peptide at Met-1 to Cys-43 directs the protein to the chloroplast. Topologically, residues Ser-44 to Arg-135 are stromal. The tract at residues Gln-45 to Lys-90 is disordered. Residues Lys-64 to Gln-82 are compositionally biased toward pro residues. A helical membrane pass occupies residues Trp-136–Val-156. At Asp-157 to Glu-172 the chain is on the lumenal side.

The protein belongs to the ELIP/psbS family. Component of a high molecular weight complex containing OHP1, OHP2 and HCF244, and PSII core proteins D1/D2, HCF136 and HCF173. Forms a trimeric complex with OHP1 and HCF244 that mutually stabilizes each subunit.

It localises to the plastid. It is found in the chloroplast thylakoid membrane. In terms of biological role, may play a photoprotective role within PSI in response to light stress. Forms a trimeric complex with OHP1 and HCF244 that is required to promote PSII core subunit assembly. The trimeric complex forms a transient PSII reaction center-like complex with PsbA, PsbD, PsbE, PsbF and PsbI subunits in thylakoids for early assembly of PSII as well as PSII repair. The trimeric complex is required for the recruitment of ribosomes to the psbA mRNA during PSII biogenesis and repair. Forms a heterodimer with OHP1 that binds chlorophylls and carotenoids, and that may function in the delivery of pigments to the PsbA subunit of PSII. The protein is Light-harvesting complex-like protein OHP2, chloroplastic of Arabidopsis thaliana (Mouse-ear cress).